The sequence spans 205 residues: MTTDFLFPKIADCSYVSCYCEENVWKLCEQVKRTRPEELAKCYAVFVSNEGRTVPLWRQKAGRGDDQVVIWDYHVFFMHNPLPNRCLVFDLDTTLPFPTYFHKYVTETFRSDLALRPEHHRFFRVIPADTYLIEFSSDRRHMRRPDGSWIKPPPSYPPILSNTNTHCLGDFICMSAGKGPGAVYSLSEFVHNFYKQPNMVAQNNK.

Residues cysteine 20, histidine 74, and aspartate 90 contribute to the active site.

The protein belongs to the NTAQ1 family. In terms of assembly, monomer.

The enzyme catalyses N-terminal L-glutaminyl-[protein] + H2O = N-terminal L-glutamyl-[protein] + NH4(+). Its function is as follows. Mediates the side-chain deamidation of N-terminal glutamine residues to glutamate, an important step in N-end rule pathway of protein degradation. Conversion of the resulting N-terminal glutamine to glutamate renders the protein susceptible to arginylation, polyubiquitination and degradation as specified by the N-end rule. Does not act on substrates with internal or C-terminal glutamine and does not act on non-glutamine residues in any position. This is Protein N-terminal glutamine amidohydrolase (tun) from Drosophila willistoni (Fruit fly).